We begin with the raw amino-acid sequence, 410 residues long: Class E basic helix-loop-helix protein 41 (410 aa).

A Glycyl lysine isopeptide (Lys-Gly) (interchain with G-Cter in SUMO2) cross-link involves residue K31. The bHLH domain maps to 44–99 (TYKLPHRLIEKKRRDRINECIAQLKDLLPEHLKLTTLGHLEKAVVLELTLKHLKAL). K121 is covalently cross-linked (Glycyl lysine isopeptide (Lys-Gly) (interchain with G-Cter in SUMO2)). The 36-residue stretch at 131-166 (FHSGFQTCAKEVLQYLARFESWTPREPRCAQLVSHL) folds into the Orange domain. Disordered regions lie at residues 209–255 (IQRT…KRPK) and 360–410 (GATA…KDAP). K240 is covalently cross-linked (Glycyl lysine isopeptide (Lys-Gly) (interchain with G-Cter in SUMO2)).

As to quaternary structure, homodimer. Heterodimer with BHLHE40/DEC1. Interacts with CIART. Interacts with BMAL1. Interacts with RXRA. Interacts with NR0B2 and HNF1A. In terms of tissue distribution, expressed in skeletal muscle, brain and lung.

The protein resides in the nucleus. In terms of biological role, transcriptional repressor involved in the regulation of the circadian rhythm by negatively regulating the activity of the clock genes and clock-controlled genes. Acts as the negative limb of a novel autoregulatory feedback loop (DEC loop) which differs from the one formed by the PER and CRY transcriptional repressors (PER/CRY loop). Both these loops are interlocked as it represses the expression of PER1 and in turn is repressed by PER1/2 and CRY1/2. Represses the activity of the circadian transcriptional activator: CLOCK-BMAL1 heterodimer by competing for the binding to E-box elements (5'-CACGTG-3') found within the promoters of its target genes. Negatively regulates its own expression and the expression of DBP and BHLHE41/DEC2. Acts as a corepressor of RXR and the RXR-LXR heterodimers and represses the ligand-induced RXRA/B/G, NR1H3/LXRA, NR1H4 and VDR transactivation activity. Inhibits HNF1A-mediated transactivation of CYP1A2, CYP2E1 and CYP3A11. This chain is Class E basic helix-loop-helix protein 41 (Bhlhe41), found in Mus musculus (Mouse).